We begin with the raw amino-acid sequence, 173 residues long: Transcriptional repressor NrdR (173 aa).

A zinc finger lies at 3-34 (CPFCQHADTRVIDSRVSEDGATIRRRRECEAC). Positions 49–139 (PAIVKSDGTR…VYRSFEDVAD (91 aa)) constitute an ATP-cone domain.

Belongs to the NrdR family. Zn(2+) serves as cofactor.

In terms of biological role, negatively regulates transcription of bacterial ribonucleotide reductase nrd genes and operons by binding to NrdR-boxes. The protein is Transcriptional repressor NrdR of Stenotrophomonas maltophilia (strain R551-3).